Consider the following 1080-residue polypeptide: DNA-directed RNA polymerase subunit beta (1080 aa).

It belongs to the RNA polymerase beta chain family. In terms of assembly, in plastids the minimal PEP RNA polymerase catalytic core is composed of four subunits: alpha, beta, beta', and beta''. When a (nuclear-encoded) sigma factor is associated with the core the holoenzyme is formed, which can initiate transcription.

Its subcellular location is the plastid. It localises to the chloroplast. It carries out the reaction RNA(n) + a ribonucleoside 5'-triphosphate = RNA(n+1) + diphosphate. Functionally, DNA-dependent RNA polymerase catalyzes the transcription of DNA into RNA using the four ribonucleoside triphosphates as substrates. The chain is DNA-directed RNA polymerase subunit beta from Mesostigma viride (Green alga).